A 182-amino-acid polypeptide reads, in one-letter code: U1 small nuclear ribonucleoprotein C (182 aa).

Residues 4–36 form a Matrin-type zinc finger; it reads YLCDYCQVWLTHDSQSVRKAHNAGRAHIQNVQD. The disordered stretch occupies residues 129–182; that stretch reads PQTTASSNTQLTQQQQSLPQTNEHQRARTHSNANNHFTKTHHQGQRSHQRFVRA. A compositionally biased stretch (low complexity) spans 130-150; it reads QTTASSNTQLTQQQQSLPQTN. Over residues 166-182 the composition is skewed to basic residues; sequence TKTHHQGQRSHQRFVRA.

Belongs to the U1 small nuclear ribonucleoprotein C family. U1 snRNP is composed of the 7 core Sm proteins smb1, smd1, smd2, smd3, sme1, smf1 and smg1 (Sm proteins B, D1, D2, D3, E, F and G, respectively) that assemble in a heptameric protein ring on the Sm site of the small nuclear RNA to form the core snRNP, and at least 9 U1 snRNP-specific proteins usp101/U1-70K, usp102/U1-A, usp103/U1-C, usp106/LUC7, usp105/PRP39, usp104/PRP40, usp107/U1-H, usp108/U1-J and usp109/U1-L. usp103/U1-C interacts with U1 snRNA and the 5' splice-site region of the pre-mRNA.

The protein localises to the nucleus. Its function is as follows. Component of the spliceosomal U1 snRNP, which is essential for recognition of the pre-mRNA 5' splice-site and the subsequent assembly of the spliceosome. usp103/U1-C is directly involved in initial 5' splice-site recognition for both constitutive and regulated alternative splicing. The interaction with the 5' splice-site seems to precede base-pairing between the pre-mRNA and the U1 snRNA. Stimulates commitment or early (E) complex formation by stabilizing the base pairing of the 5' end of the U1 snRNA and the 5' splice-site region. In Schizosaccharomyces pombe (strain 972 / ATCC 24843) (Fission yeast), this protein is U1 small nuclear ribonucleoprotein C (usp103).